Consider the following 270-residue polypeptide: MNPQCARCGKVVYPTEKVNCLDKYWHKGCFHCEVCKMALNMNNYKGYEKKPYCNAHYPKQSFTTVADTPENLRLKQQSELQSQVKYKRDFEESKGRGFSIVTDTPELQRLKRTQEQISNVKYHEDFEKTKGRGFTPVVDDPVTERVRKSTQVVSDAAYKGVQPHVVEMDRRPGIIVAPVLPGAYQQSHSQGYGYMHQTSVSSMRSMQPPAHLRTYRAMYDYSAQDEDEVSFRDGDYIVNVQPIDDGWMYGTVQRTGRTGMLPANYIEFVN.

The LIM zinc-binding domain occupies P3–T63. A Nebulin 1 repeat occupies S61–G95. At R96 the chain carries Omega-N-methylarginine. The stretch at G97–G131 is one Nebulin 2 repeat. An Omega-N-methylarginine modification is found at R132. A Nebulin 3 repeat occupies G133–K159. Residue T135 is modified to Phosphothreonine. The SH3 domain maps to A210–N270. Phosphoserine is present on S230.

Its subcellular location is the cytoplasm. Binds to actin and plays an important role in the assembly of the Z-disk. Isoform 2 might play a role in the assembly of focal adhesion. This is LIM zinc-binding domain-containing Nebulette (Nebl) from Mus musculus (Mouse).